Consider the following 503-residue polypeptide: MTAVADAPQAELEGVSSPRAVVVGIMAGEGVQIGVLLDANAPVSVMTDPLLKVVNSRLRELGESTLEAAGRGRWALCLIDGSPLRATQSLTEQDVYDGDRLWIRFIPDTEHRSQVIEHISTAVASNLSKRFASIDPVVAVQVGAGMVGTGVILASGVLGWWRWHHNTWLTTIFASVIAVLVLMVAMMLLMRATTDADRRVADIMLVSGLAPLTVAAASAPPGSVGSPQAVLGFGVLSIAAALALRFTGRRLAIYTAIVTICGLTTLASLSRMVAATSAVTLFATMLLICVVMYHASPALSRRLSGIRLPVFPSATSRWVFEARPDLPTTVAVAAGGPPVLEGPASVRDVVLQAERARSFLSGLLVGLGVLMVVSLTSLCNPHTSERWLPLMLAGFTSGFLMLRGRSYVDRWQSITLAVTAVIVVAAVSVRYALVLSSPLSVSIVASLLVLLPAAGMTAAAVVPNTIYSPLFRKFVEWTEYLCLMPIFPLAFWLMNVYAAIRYR.

10 helical membrane-spanning segments follow: residues 137-157 (VVAV…ASGV), 169-189 (LTTI…MMLL), 200-220 (VADI…ASAP), 224-244 (VGSP…ALAL), 250-270 (RLAI…ASLS), 272-292 (MVAA…CVVM), 359-379 (FLSG…TSLC), 414-434 (ITLA…YALV), 443-463 (IVAS…AVVP), and 480-500 (YLCL…YAAI).

Belongs to the EccD/Snm4 family. In terms of assembly, part of the ESX-5 / type VII secretion system (T7SS), which is composed of cytosolic and membrane components. The ESX-5 membrane complex is composed of EccB5, EccC5, EccD5 and EccE5.

The protein localises to the cell inner membrane. Part of the ESX-5 specialized secretion system, which is responsible for the secretion of EsxN and a number of PE_PGRS and PPE proteins. This component is essential for ESX-5 complex stability and secretion. The polypeptide is ESX-5 secretion system protein EccD5 (Mycobacterium marinum (strain ATCC BAA-535 / M)).